The sequence spans 177 residues: Large ribosomal subunit protein uL6 (177 aa).

A compositionally biased stretch (basic and acidic residues) spans 157 to 171; it reads YKGKGVRYSDENVRR. Residues 157–177 are disordered; that stretch reads YKGKGVRYSDENVRRKEAKKK.

It belongs to the universal ribosomal protein uL6 family. In terms of assembly, part of the 50S ribosomal subunit.

Functionally, this protein binds to the 23S rRNA, and is important in its secondary structure. It is located near the subunit interface in the base of the L7/L12 stalk, and near the tRNA binding site of the peptidyltransferase center. This Pseudoalteromonas translucida (strain TAC 125) protein is Large ribosomal subunit protein uL6.